A 316-amino-acid polypeptide reads, in one-letter code: N-acetyl-gamma-glutamyl-phosphate reductase (316 aa).

Cys-136 is an active-site residue.

This sequence belongs to the NAGSA dehydrogenase family. Type 1 subfamily.

It is found in the cytoplasm. The enzyme catalyses N-acetyl-L-glutamate 5-semialdehyde + phosphate + NADP(+) = N-acetyl-L-glutamyl 5-phosphate + NADPH + H(+). It functions in the pathway amino-acid biosynthesis; L-arginine biosynthesis; N(2)-acetyl-L-ornithine from L-glutamate: step 3/4. Its function is as follows. Catalyzes the NADPH-dependent reduction of N-acetyl-5-glutamyl phosphate to yield N-acetyl-L-glutamate 5-semialdehyde. This chain is N-acetyl-gamma-glutamyl-phosphate reductase, found in Xanthomonas axonopodis pv. citri (strain 306).